The chain runs to 238 residues: Arginine ABC transporter permease protein ArtQ (238 aa).

The Periplasmic segment spans residues 1–14 (MNEFFPLASAAGMT). The ABC transmembrane type-1 domain maps to 11 to 223 (AGMTVGLAVC…VITLLSQYIL (213 aa)). Residues 15-35 (VGLAVCALIVGLALAMFFAVW) form a helical membrane-spanning segment. Residues 36-48 (ESAKWRPVAWAGS) are Cytoplasmic-facing. Residues 49–69 (ALVTILRGLPEILVVLFIYFG) traverse the membrane as a helical segment. Topologically, residues 70 to 98 (SSQLLLTLSDGFTINLGFVQIPVQMDIEN) are periplasmic. The chain crosses the membrane as a helical span at residues 99 to 119 (FDVSPFLCGVIALSLLYAAYA). The Cytoplasmic segment spans residues 120–168 (SQTLRGALKAVPVGQWESGQALGLSKSAIFFRLVMPQMWRHALPGLGNQ). The chain crosses the membrane as a helical span at residues 169 to 189 (WLVLLKDTALVSLISVNDLML). The Periplasmic portion of the chain corresponds to 190–201 (QTKSIATRTQEP). A helical membrane pass occupies residues 202-222 (FTWYIVAAAIYLVITLLSQYI). Over 223–238 (LKRIDLRATRFERRPS) the chain is Cytoplasmic.

It belongs to the binding-protein-dependent transport system permease family. HisMQ subfamily. In terms of assembly, the complex is composed of two ATP-binding proteins (ArtP), two transmembrane proteins (ArtM and ArtQ) and two solute-binding proteins (ArtJ and ArtI).

The protein localises to the cell inner membrane. Functionally, part of the ABC transporter complex ArtPIQMJ involved in arginine transport. Probably responsible for the translocation of the substrate across the membrane. The chain is Arginine ABC transporter permease protein ArtQ (artQ) from Escherichia coli O6:H1 (strain CFT073 / ATCC 700928 / UPEC).